The sequence spans 343 residues: NADH-ubiquinone oxidoreductase chain 2 (343 aa).

Transmembrane regions (helical) follow at residues 1-21 (MNPMSWLIITTSIALSTTMIT), 59-81 (YYLIQTMASTSMLFAATTNALNT), 96-116 (TIITLALMMKMAAAPFHSWLP), 150-170 (NITLILLSAMLSITMGGLGSL), 178-198 (LMAFSSIAHTGWIMATITMAP), 200-220 (ISTLTFTIYIMTTIPTFLLIN), 241-261 (MTILSMTILSMGGLPPLSGFM), and 270-290 (LISMNMITEATLMAMASLLSL).

Belongs to the complex I subunit 2 family.

The protein resides in the mitochondrion inner membrane. The catalysed reaction is a ubiquinone + NADH + 5 H(+)(in) = a ubiquinol + NAD(+) + 4 H(+)(out). Core subunit of the mitochondrial membrane respiratory chain NADH dehydrogenase (Complex I) that is believed to belong to the minimal assembly required for catalysis. Complex I functions in the transfer of electrons from NADH to the respiratory chain. The immediate electron acceptor for the enzyme is believed to be ubiquinone. In Lycodon semicarinatus (Ryukyu odd-tooth snake), this protein is NADH-ubiquinone oxidoreductase chain 2 (MT-ND2).